Consider the following 882-residue polypeptide: Piwi-like protein 3 (882 aa).

The span at 1-15 (MPGRARTRARGRARR) shows a compositional bias: basic residues. The tract at residues 1–91 (MPGRARTRAR…EAGLHTAPLQ (91 aa)) is disordered. A compositionally biased stretch (polar residues) spans 32–46 (SATTQEPPQLQSTPR). The region spanning 293 to 406 (TAYDFIKRTS…LIPQLCHMTG (114 aa)) is the PAZ domain. A Piwi domain is found at 578 to 868 (KVICILPNDD…LAYLVGQSIH (291 aa)).

This sequence belongs to the argonaute family. Piwi subfamily. As to expression, expressed in testis.

The protein localises to the cytoplasm. In terms of biological role, may play a role during spermatogenesis by repressing transposable elements and preventing their mobilization, which is essential for the germline integrity. Acts via the piRNA metabolic process, which mediates the repression of transposable elements during meiosis by forming complexes composed of piRNAs and Piwi proteins and govern the methylation and subsequent repression of transposons. Directly binds piRNAs, a class of 24 to 30 nucleotide RNAs that are generated by a Dicer-independent mechanism and are primarily derived from transposons and other repeated sequence elements. Besides their function in transposable elements repression, piRNAs are probably involved in other processes during meiosis such as translation regulation. This Homo sapiens (Human) protein is Piwi-like protein 3 (PIWIL3).